We begin with the raw amino-acid sequence, 96 residues long: ATP synthase subunit e, mitochondrial (96 aa).

Ser2 is subject to N-acetylserine.

The protein belongs to the ATPase e subunit family. In terms of assembly, F-type ATPases have 2 components, CF(1) - the catalytic core - and CF(0) - the membrane proton channel. In yeast, the dimeric form of ATP synthase consists of 17 polypeptides: alpha, beta, gamma, delta, epsilon, 4 (B), 5 (OSCP), 6 (A), 8, 9 (C), d, E (Tim11), f, g, h, i/j and k.

The protein localises to the mitochondrion. The protein resides in the mitochondrion inner membrane. Mitochondrial membrane ATP synthase (F(1)F(0) ATP synthase or Complex V) produces ATP from ADP in the presence of a proton gradient across the membrane which is generated by electron transport complexes of the respiratory chain. F-type ATPases consist of two structural domains, F(1) - containing the extramembraneous catalytic core, and F(0) - containing the membrane proton channel, linked together by a central stalk and a peripheral stalk. During catalysis, ATP synthesis in the catalytic domain of F(1) is coupled via a rotary mechanism of the central stalk subunits to proton translocation. Part of the complex F(0) domain. Minor subunit located with subunit a in the membrane. This chain is ATP synthase subunit e, mitochondrial (TIM11), found in Saccharomyces cerevisiae (strain ATCC 204508 / S288c) (Baker's yeast).